The chain runs to 224 residues: Ribonuclease T (224 aa).

The region spanning 32–206 (VVVDVETGGF…YDTEKTAELF (175 aa)) is the Exonuclease domain. Residues Asp-35, Glu-37, His-193, and Asp-198 each coordinate Mg(2+). Residue His-193 is the Proton donor/acceptor of the active site.

This sequence belongs to the RNase T family. As to quaternary structure, homodimer. Mg(2+) is required as a cofactor.

Trims short 3' overhangs of a variety of RNA species, leaving a one or two nucleotide 3' overhang. Responsible for the end-turnover of tRNA: specifically removes the terminal AMP residue from uncharged tRNA (tRNA-C-C-A). Also appears to be involved in tRNA biosynthesis. In Pseudomonas aeruginosa (strain UCBPP-PA14), this protein is Ribonuclease T.